A 429-amino-acid polypeptide reads, in one-letter code: Serine hydroxymethyltransferase (429 aa).

Residues leucine 126 and 130 to 132 (GHL) each bind (6S)-5,6,7,8-tetrahydrofolate. Lysine 235 carries the post-translational modification N6-(pyridoxal phosphate)lysine. Residue 359 to 361 (SPF) coordinates (6S)-5,6,7,8-tetrahydrofolate.

Belongs to the SHMT family. Homodimer. Pyridoxal 5'-phosphate serves as cofactor.

It is found in the cytoplasm. It carries out the reaction (6R)-5,10-methylene-5,6,7,8-tetrahydrofolate + glycine + H2O = (6S)-5,6,7,8-tetrahydrofolate + L-serine. It participates in one-carbon metabolism; tetrahydrofolate interconversion. It functions in the pathway amino-acid biosynthesis; glycine biosynthesis; glycine from L-serine: step 1/1. In terms of biological role, catalyzes the reversible interconversion of serine and glycine with tetrahydrofolate (THF) serving as the one-carbon carrier. This reaction serves as the major source of one-carbon groups required for the biosynthesis of purines, thymidylate, methionine, and other important biomolecules. Also exhibits THF-independent aldolase activity toward beta-hydroxyamino acids, producing glycine and aldehydes, via a retro-aldol mechanism. This chain is Serine hydroxymethyltransferase, found in Synechococcus sp. (strain CC9902).